A 588-amino-acid chain; its full sequence is Aspartate--tRNA ligase (588 aa).

Glu-177 provides a ligand contact to L-aspartate. The aspartate stretch occupies residues 201–204 (QLFK). Residue Arg-223 participates in L-aspartate binding. Residues 223-225 (RDE) and Gln-232 each bind ATP. His-451 is a binding site for L-aspartate. Glu-485 contributes to the ATP binding site. Arg-492 lines the L-aspartate pocket. 537–540 (GLDR) lines the ATP pocket.

Belongs to the class-II aminoacyl-tRNA synthetase family. Type 1 subfamily. As to quaternary structure, homodimer.

The protein localises to the cytoplasm. The enzyme catalyses tRNA(Asp) + L-aspartate + ATP = L-aspartyl-tRNA(Asp) + AMP + diphosphate. Its function is as follows. Catalyzes the attachment of L-aspartate to tRNA(Asp) in a two-step reaction: L-aspartate is first activated by ATP to form Asp-AMP and then transferred to the acceptor end of tRNA(Asp). In Staphylococcus aureus (strain MRSA252), this protein is Aspartate--tRNA ligase.